Reading from the N-terminus, the 247-residue chain is 3-deoxy-manno-octulosonate cytidylyltransferase (247 aa).

The protein belongs to the KdsB family.

It is found in the cytoplasm. It catalyses the reaction 3-deoxy-alpha-D-manno-oct-2-ulosonate + CTP = CMP-3-deoxy-beta-D-manno-octulosonate + diphosphate. It participates in nucleotide-sugar biosynthesis; CMP-3-deoxy-D-manno-octulosonate biosynthesis; CMP-3-deoxy-D-manno-octulosonate from 3-deoxy-D-manno-octulosonate and CTP: step 1/1. The protein operates within bacterial outer membrane biogenesis; lipopolysaccharide biosynthesis. Activates KDO (a required 8-carbon sugar) for incorporation into bacterial lipopolysaccharide in Gram-negative bacteria. This Bdellovibrio bacteriovorus (strain ATCC 15356 / DSM 50701 / NCIMB 9529 / HD100) protein is 3-deoxy-manno-octulosonate cytidylyltransferase.